The chain runs to 256 residues: Alcohol dehydrogenase (256 aa).

12 to 35 (FVAGLGGIGLDTSKELVKRDLKNL) is a binding site for NAD(+). Substrate is bound at residue Ser140. The active-site Proton acceptor is the Tyr153.

Belongs to the short-chain dehydrogenases/reductases (SDR) family. As to quaternary structure, homodimer.

The catalysed reaction is a primary alcohol + NAD(+) = an aldehyde + NADH + H(+). It carries out the reaction a secondary alcohol + NAD(+) = a ketone + NADH + H(+). This is Alcohol dehydrogenase (Adh) from Drosophila teissieri (Fruit fly).